We begin with the raw amino-acid sequence, 497 residues long: Proline--tRNA ligase (497 aa).

This sequence belongs to the class-II aminoacyl-tRNA synthetase family. ProS type 3 subfamily. Homodimer.

Its subcellular location is the cytoplasm. The catalysed reaction is tRNA(Pro) + L-proline + ATP = L-prolyl-tRNA(Pro) + AMP + diphosphate. In terms of biological role, catalyzes the attachment of proline to tRNA(Pro) in a two-step reaction: proline is first activated by ATP to form Pro-AMP and then transferred to the acceptor end of tRNA(Pro). This is Proline--tRNA ligase from Bacteroides fragilis (strain ATCC 25285 / DSM 2151 / CCUG 4856 / JCM 11019 / LMG 10263 / NCTC 9343 / Onslow / VPI 2553 / EN-2).